The primary structure comprises 606 residues: MNSNSSVQFNEQGVPVSTTFDDIYFSVESGVDESQYVFLAQNGLPRRWLSLPAHYSFTIAETGFGTGLNFLLTWKRFLEQAPANTRLHFVSFEKFPLSRQQLEQAYQLLEPIAEFSQSFLEHYPATDPGCHRIILSQGRVILDLWIGDLNELLPEWLPQAQKQIDAWFLDGFAPAKNPEMWQPTLFDAMKQTAHSGTTFATFTAAGSVKRALQQNGFEVQKVAGFGRKRDMLCGHYLSAEVCQKYYDRRDVTIIGGGISAACSALALKHRGVNVRVISAGSADGASGNPQGAVYPLLHAEYTPLSRFYWQAFSTATSFYRNFCDDHWFPVGVMQPAFNDDRARRYQRIADELYAPDTVRYLSQPEAEQEAGVSLAVPALLYPKAGWLRPAAVVKSLLETAQIELIEGEAKALEKTESGSWQISLKDGSLLAAERVLIATGHHINGLLPESVNPLPIQPVRGQVSLVQTTPLLSSLKTVLCFKGYLVPEDGNHHCVGASFNRDREDLEPTPEDDEENLKQLAENAKQPWAESLQLTSQRVSVRATSPDHQPVTGAVAENLYVITALGSRGFTSAPILAEVIACQLTGELTPLTQDALRRISVSRFKG.

A tRNA (mnm(5)s(2)U34)-methyltransferase region spans residues M1–L237. The FAD-dependent cmnm(5)s(2)U34 oxidoreductase stretch occupies residues I254–G606.

This sequence in the N-terminal section; belongs to the methyltransferase superfamily. tRNA (mnm(5)s(2)U34)-methyltransferase family. In the C-terminal section; belongs to the DAO family. The cofactor is FAD.

The protein resides in the cytoplasm. It carries out the reaction 5-aminomethyl-2-thiouridine(34) in tRNA + S-adenosyl-L-methionine = 5-methylaminomethyl-2-thiouridine(34) in tRNA + S-adenosyl-L-homocysteine + H(+). Catalyzes the last two steps in the biosynthesis of 5-methylaminomethyl-2-thiouridine (mnm(5)s(2)U) at the wobble position (U34) in tRNA. Catalyzes the FAD-dependent demodification of cmnm(5)s(2)U34 to nm(5)s(2)U34, followed by the transfer of a methyl group from S-adenosyl-L-methionine to nm(5)s(2)U34, to form mnm(5)s(2)U34. This is tRNA 5-methylaminomethyl-2-thiouridine biosynthesis bifunctional protein MnmC from Idiomarina loihiensis (strain ATCC BAA-735 / DSM 15497 / L2-TR).